A 94-amino-acid polypeptide reads, in one-letter code: uncharacterized protein (94 aa).

Specifically expressed in retina and retinal pigment epithelium.

This is an uncharacterized protein from Homo sapiens (Human).